The sequence spans 192 residues: UPF0312 protein Ent638_1570 (192 aa).

Residues 1-22 form the signal peptide; it reads MKKRLLGIALGSLLFTTGSAVA.

Belongs to the UPF0312 family. Type 1 subfamily.

The protein resides in the periplasm. This Enterobacter sp. (strain 638) protein is UPF0312 protein Ent638_1570.